The sequence spans 35 residues: Somatostatin (35 aa).

An intrachain disulfide couples cysteine 24 to cysteine 35.

The protein belongs to the somatostatin family.

It localises to the secreted. Somatostatin inhibits the release of somatotropin. The protein is Somatostatin (sst) of Lampetra fluviatilis (European river lamprey).